The sequence spans 106 residues: Nucleoid-associated protein Fjoh_2555 (106 aa).

It belongs to the YbaB/EbfC family. Homodimer.

It localises to the cytoplasm. It is found in the nucleoid. Its function is as follows. Binds to DNA and alters its conformation. May be involved in regulation of gene expression, nucleoid organization and DNA protection. The chain is Nucleoid-associated protein Fjoh_2555 from Flavobacterium johnsoniae (strain ATCC 17061 / DSM 2064 / JCM 8514 / BCRC 14874 / CCUG 350202 / NBRC 14942 / NCIMB 11054 / UW101) (Cytophaga johnsonae).